The primary structure comprises 589 residues: Probable translation initiation factor IF-2 (589 aa).

A tr-type G domain is found at 5 to 219; it reads IRTPIVCVLG…IMIGLAQRYL (215 aa). Positions 14-21 are G1; it reads GHVDHGKT. 14-21 is a binding site for GTP; the sequence is GHVDHGKT. Residues 39 to 43 are G2; sequence AITQH. A G3 region spans residues 75–78; sequence DTPG. Residues 75–79 and 129–132 contribute to the GTP site; these read DTPGH and TKLD. A G4 region spans residues 129-132; the sequence is TKLD. The tract at residues 197–199 is G5; it reads SSM.

This sequence belongs to the TRAFAC class translation factor GTPase superfamily. Classic translation factor GTPase family. IF-2 subfamily.

Its function is as follows. Function in general translation initiation by promoting the binding of the formylmethionine-tRNA to ribosomes. Seems to function along with eIF-2. The polypeptide is Probable translation initiation factor IF-2 (Methanocorpusculum labreanum (strain ATCC 43576 / DSM 4855 / Z)).